The primary structure comprises 376 residues: Serpin B6 (376 aa).

N-acetylmethionine is present on Met1. Ser151 is modified (phosphoserine). An N6-acetyllysine modification is found at Lys195.

This sequence belongs to the serpin family. Ov-serpin subfamily. In terms of assembly, forms a complex with the monomeric form of beta-tryptase.

The protein resides in the cytoplasm. Inhibitor of cathepsin G, kallikrein-8 and thrombin. May play an important role in the inner ear in the protection against leakage of lysosomal content during stress. May be involved in the regulation of serine proteinases present in the brain or extravasated from the blood. The polypeptide is Serpin B6 (SERPINB6) (Pongo abelii (Sumatran orangutan)).